The primary structure comprises 669 residues: L-type lectin-domain containing receptor kinase IV.4 (669 aa).

An N-terminal signal peptide occupies residues 1–23 (MFFIKLFTIFFLSFFWQSLKSSS). At 24–294 (QIIDFTYNGF…TRVYRFYKNW (271 aa)) the chain is on the extracellular side. Residues 26–260 (IDFTYNGFRP…SEIFVLGWSF (235 aa)) are legume-lectin like. 5 N-linked (GlcNAc...) asparagine glycosylation sites follow: N58, N80, N127, N152, and N185. The helical transmembrane segment at 295–315 (VPLISLLLIPFLLIIFLVRFI) threads the bilayer. Topologically, residues 316-669 (MKRRRKFAEE…VAYSLLSSGR (354 aa)) are cytoplasmic. The 278-residue stretch at 350–627 (FKDKNILGSG…LQYLRGDAML (278 aa)) folds into the Protein kinase domain. ATP contacts are provided by residues 356 to 364 (LGSGGFGSV) and K379. Residue D475 is the Proton acceptor of the active site.

This sequence in the C-terminal section; belongs to the protein kinase superfamily. Ser/Thr protein kinase family. The protein in the N-terminal section; belongs to the leguminous lectin family.

Its subcellular location is the cell membrane. It catalyses the reaction L-seryl-[protein] + ATP = O-phospho-L-seryl-[protein] + ADP + H(+). It carries out the reaction L-threonyl-[protein] + ATP = O-phospho-L-threonyl-[protein] + ADP + H(+). Functionally, involved in resistance response to the pathogenic oomycetes Phytophthora infestans and Phytophthora capsici and to the pathogenic bacteria Pseudomonas syringae. The protein is L-type lectin-domain containing receptor kinase IV.4 of Arabidopsis thaliana (Mouse-ear cress).